Here is a 235-residue protein sequence, read N- to C-terminus: Type III pantothenate kinase (235 aa).

6–13 contributes to the ATP binding site; the sequence is DVGNTSLK. Substrate contacts are provided by residues Tyr79 and 86–89; that span reads GIDR. Asp88 acts as the Proton acceptor in catalysis. Asp109 serves as a coordination point for K(+). Thr112 serves as a coordination point for ATP. Substrate is bound at residue Thr164.

Belongs to the type III pantothenate kinase family. In terms of assembly, homodimer. It depends on NH4(+) as a cofactor. K(+) is required as a cofactor.

The protein resides in the cytoplasm. It carries out the reaction (R)-pantothenate + ATP = (R)-4'-phosphopantothenate + ADP + H(+). Its pathway is cofactor biosynthesis; coenzyme A biosynthesis; CoA from (R)-pantothenate: step 1/5. Its function is as follows. Catalyzes the phosphorylation of pantothenate (Pan), the first step in CoA biosynthesis. The protein is Type III pantothenate kinase of Pseudoalteromonas translucida (strain TAC 125).